The chain runs to 265 residues: WUSCHEL-related homeobox 3B (265 aa).

The homeobox; WUS-type DNA-binding region spans 4 to 68 (TPSTRWCPTP…NHKARERQRL (65 aa)). Disordered stretches follow at residues 77 to 107 (QQQY…APPA) and 242 to 265 (PTKS…TSTN). A compositionally biased stretch (low complexity) spans 254–265 (SSKSSSCSTSTN).

The protein belongs to the WUS homeobox family. In terms of tissue distribution, predominantly expressed in tissues enriched for shoot meristems and young lateral organ primordia. First expressed in lateral domains of shoot meristems. It is then expressed in the margins of young lateral organ primordia. Not expressed in roots, seedling leaves or fully expanded coleoptiles. Also expressed in vegetative shoot apices (five leaf primordia and the SAM) and in the male inflorescence. Expressed at high level in the female inflorescence.

The protein localises to the nucleus. In terms of biological role, probable transcription factor required to initiate organ founder cells in a lateral domain of shoot meristems. Involved in leaf formation. The polypeptide is WUSCHEL-related homeobox 3B (WOX3B) (Zea mays (Maize)).